Consider the following 576-residue polypeptide: MSSTVIILIVVLLVILVAFYAFAILMRKKTEDRILALEERKESLFDLPVQEEIDSVKKMHLVGQSQTIFREWNQKWLDLSSNSFADLEEHIFEAEQLNDSFHFFRARESVADSEAQIEMMEGDVEGIRQGVAQLVEQEKRNSNKIQESLDLYDNLRSDIADNADLYGTVITELEKHLANIETEFSQFVTLNSTGDPIEAAEVLETAEEHTIALRAITEQIPSFIKTIEKDVPKRLEELQEASDKFIAEDYILPENVNLKERMDDLQHHLEESSSLLEQFELDRVEAELDLIQERVEELYSIFEREYSARRNVEKRSSVLKEYIEHIRVNNKNLLLEIDHVTQAYILSGNEKGYVRGYQEHLESLDADVDEIIANIEAKAIPYSSLSRRVNSVVNALEDIEKNQIKISETLSGLRDEERAAQEIAERFDSELRTIKRYVEKCNLPGLPKDYLDLFFMTGDRVQNLFKELGRVRINIDTINHLVDVSTEDMHVLKEATTNLTDHAVLAEQLIQYANRYKASNEQVAQGISRALQLFENSRDYDGSFDEISKTLEIVEPGAASRISGVYFKNKPTPDYL.

Over 1-7 (MSSTVII) the chain is Extracellular. Residues 8–26 (LIVVLLVILVAFYAFAILM) traverse the membrane as a helical segment. The Cytoplasmic portion of the chain corresponds to 27–576 (RKKTEDRILA…FKNKPTPDYL (550 aa)). 3 coiled-coil regions span residues 105-134 (RARESVADSEAQIEMMEGDVEGIRQGVAQL), 254-305 (ENVN…FERE), and 356-402 (GYQE…IEKN).

This sequence belongs to the EzrA family.

It localises to the cell membrane. Functionally, negative regulator of FtsZ ring formation; modulates the frequency and position of FtsZ ring formation. Inhibits FtsZ ring formation at polar sites. Interacts either with FtsZ or with one of its binding partners to promote depolymerization. The chain is Septation ring formation regulator EzrA from Lactococcus lactis subsp. cremoris (strain MG1363).